A 1706-amino-acid polypeptide reads, in one-letter code: MHQNTESVAATETLAEVPEHVLRGLPEEVRLFPSAVDKTRIGVWATKPILKGKKFGPFVGDKKKRSQVRNNVYMWEVYYPNLGWMCIDATDPEKGNWLRYVNWACSGEEQNLFPLEINRAIYYKTLKPIAPGEELLVWYNGEDNPEIAAAIEEERASARSKRSSPKSRRGKKKSHENKNKGIRTHPTQLKASELDSTFANMRGSAEGPKEEDERPLASAPEQPAPLPEVGNQDAVPQVAIPLPACEPQPEVDGKQEVTDCEVNDVEEEELEEEEELEEEEEEELGEDGVEEADMPNESSAKEPEIRCEEKPEDLLEEPQSMSNEAREDSPDVTPPPHTPRAREEANGDVLETFMFPCQHCERKFATKQGLERHMHIHISTINHAFKCKYCGKRFGTQINRRRHERRHETGLKRRPSMTLQSSEDPDDGKGENVTSKDESSPPQLGQDCLILNSEKTSQEVLNSSFVEENGEVKELHPCKYCKKVFGTHTNMRRHQRRVHERHLIPKGVRRKGGLLEEPQPPAEQAPPSQNVYVPSTEPEEEGETDDVYIMDISSNISENLNYYIDGKIQTNSSTSNCDVIEMESNSAHLYGIDCLLTPVTVEITQNIKSTQVSVTDDLLKDSPSSTNCESKKRRTASPPVLPKIKTETESDSTAPSCSLSLPLSISTAEVVSFHKEKGVYLSSKLKQLLQTQDKLTLPAGFSAAEIPKLGPVCASAPASMLPVTSSRFKRRTSSPPSSPQHSPALRDFGKPNDGKAAWTDTVLTSKKPKLESRSDSPAWSLSGRDERETGSPPCFDEYKISKEWAASSTFSSVCNQQPLDLSSGVKQKSEGTGKTPVPWESVLDLSVHKKPCDSEGKEFKENHLAQPAAKKKKPTTCMLQKVLLNEYNGVSLPTETTPEVTRSPSPCKSPDTQPDPELGPDSSCSVPTAESPPEVVGPSSPPLQTASLSSGQLPPLLTPTEPSSPPPCPPVLTVATPPPPLLPTVPLSHPSSDASPQQCPSPFSNTTAQSPLPILSPTVSPSPSPIPPVEPLMSAASPGPPTLSSSSSSSSSFPSSSCSSTSPSPPPLSAVSSVVSSGDNLEASLPAVTFKQEESESEGLKPKEEAPPAGGQSVVQETFSKNFICNVCESPFLSIKDLTKHLSVHAEEWPFKCEFCVQLFKVKTDLSEHRFLLHGVGNIFVCSVCKKEFAFLCNLQQHQRDLHPDEVCTHHEFESGTLRPQNFTDPSKANVEHMPSLPEEPLETSREEELNDSSEELYTTIKIMASGIKTKDPDVRLGLNQHYPSFKPPPFQYHHRNPMGIGVTATNFTTHNIPQTFTTAIRCTKCGKGVDNMPELHKHILACASASDKKRYTPKKNPVPLKQTVQPKNGVVVLDNSGKNAFRRMGQPKRLSFNVELGKMSPNKLKLSALKKKNQLVQKAILQKNRAAKQKADLRDTSEASSHICPYCDREFTYIGSLNKHAAFSCPKKPLSPSKRKVSHSSKKGGHASSSSSDRNSSCHPRRRTADTEIKMQSTQAPLGKTRARSTGPAQASLPSSSFRSRQNVKFAASVKSKKASSSSLRNSSPIRMAKITHVEGKKPKAVAKSHSAQLSSKSSRGLHVRVQKSKAVIQSKTALASKRRTDRFIVKSRERSGGPITRSLQLAAAADLSESRREDSSARHELKDFSYSLRLASRCGSSTASYITRQCRKVKAAAATPFQGPFLKE.

One can recognise an SET domain in the interval 27–140 (EEVRLFPSAV…PGEELLVWYN (114 aa)). Positions 154–342 (ERASARSKRS…TPPPHTPRAR (189 aa)) are disordered. A compositionally biased stretch (basic residues) spans 158-183 (ARSKRSSPKSRRGKKKSHENKNKGIR). Over residues 185 to 199 (HPTQLKASELDSTFA) the composition is skewed to polar residues. Acidic residues predominate over residues 258 to 294 (TDCEVNDVEEEELEEEEELEEEEEEELGEDGVEEADM). The segment covering 299–313 (SAKEPEIRCEEKPED) has biased composition (basic and acidic residues). 2 C2H2-type zinc fingers span residues 355–377 (FPCQ…MHIH) and 385–407 (FKCK…ERRH). Disordered stretches follow at residues 400 to 446 (RRRH…QLGQ), 492 to 542 (RRHQ…EEEG), and 618 to 655 (LLKD…STAP). Residue Ser416 is modified to Phosphoserine. The span at 427–439 (DGKGENVTSKDES) shows a compositional bias: basic and acidic residues. The C2H2-type 3 zinc finger occupies 476–499 (HPCKYCKKVFGTHTNMRRHQRRVH). Position 637 is a phosphoserine (Ser637). Residues Lys645, Lys684, and Lys686 each participate in a glycyl lysine isopeptide (Lys-Gly) (interchain with G-Cter in SUMO2) cross-link. 3 disordered regions span residues 724-794 (TSSR…SPPC), 823-1075 (SGVK…SSVV), and 1088-1112 (VTFK…AGGQ). A compositionally biased stretch (low complexity) spans 733–743 (SSPPSSPQHSP). Ser738 bears the Phosphoserine mark. A Glycyl lysine isopeptide (Lys-Gly) (interchain with G-Cter in SUMO2) cross-link involves residue Lys769. Phosphoserine occurs at positions 776, 780, and 791. The span at 823-832 (SGVKQKSEGT) shows a compositional bias: polar residues. Over residues 846–863 (SVHKKPCDSEGKEFKENH) the composition is skewed to basic and acidic residues. Glycyl lysine isopeptide (Lys-Gly) (interchain with G-Cter in SUMO2) cross-links involve residues Lys860 and Lys870. Composition is skewed to polar residues over residues 891-912 (SLPT…SPDT) and 943-952 (LQTASLSSGQ). The span at 962 to 983 (PSSPPPCPPVLTVATPPPPLLP) shows a compositional bias: pro residues. A compositionally biased stretch (polar residues) spans 993–1009 (DASPQQCPSPFSNTTAQ). Low complexity predominate over residues 1010–1019 (SPLPILSPTV). A compositionally biased stretch (pro residues) spans 1020-1030 (SPSPSPIPPVE). Low complexity predominate over residues 1034–1062 (SAASPGPPTLSSSSSSSSSFPSSSCSSTS). A compositionally biased stretch (basic and acidic residues) spans 1091-1106 (KQEESESEGLKPKEEA). C2H2-type zinc fingers lie at residues 1123-1145 (FICN…LSVH), 1151-1174 (FKCE…FLLH), and 1180-1203 (FVCS…RDLH). Residues Lys1136 and Lys1140 each participate in a glycyl lysine isopeptide (Lys-Gly) (interchain with G-Cter in SUMO2) cross-link. Positions 1218–1227 (LRPQNFTDPS) are enriched in polar residues. The disordered stretch occupies residues 1218-1251 (LRPQNFTDPSKANVEHMPSLPEEPLETSREEELN). Lys1269 participates in a covalent cross-link: Glycyl lysine isopeptide (Lys-Gly) (interchain with G-Cter in SUMO2). The C2H2-type 7; atypical zinc-finger motif lies at 1321–1343 (IRCTKCGKGVDNMPELHKHILAC). The C2H2-type 8; atypical zinc finger occupies 1443–1465 (HICPYCDREFTYIGSLNKHAAFS). Residues 1466-1563 (CPKKPLSPSK…KKASSSSLRN (98 aa)) are disordered. A compositionally biased stretch (basic residues) spans 1474–1486 (SKRKVSHSSKKGG). Residues 1487 to 1498 (HASSSSSDRNSS) show a composition bias toward low complexity. Polar residues predominate over residues 1528 to 1544 (GPAQASLPSSSFRSRQN). Residues 1548-1563 (AASVKSKKASSSSLRN) show a composition bias toward low complexity.

The protein belongs to the class V-like SAM-binding methyltransferase superfamily. As to quaternary structure, binds to the retinoblastoma protein (RB). Interacts with GATA3.

The protein resides in the nucleus. It carries out the reaction L-lysyl-[histone] + S-adenosyl-L-methionine = N(6)-methyl-L-lysyl-[histone] + S-adenosyl-L-homocysteine + H(+). It catalyses the reaction L-lysyl(9)-[histone H3] + 3 S-adenosyl-L-methionine = N(6),N(6),N(6)-trimethyl-L-lysyl(9)-[histone H3] + 3 S-adenosyl-L-homocysteine + 3 H(+). S-adenosyl-L-methionine-dependent histone methyltransferase that specifically methylates 'Lys-9' of histone H3. May function as a DNA-binding transcription factor. Binds to the macrophage-specific TPA-responsive element (MTE) of the HMOX1 (heme oxygenase 1) gene and may act as a transcriptional activator of this gene. In Rattus norvegicus (Rat), this protein is PR domain zinc finger protein 2 (Prdm2).